The chain runs to 236 residues: Apoptosis regulator Bcl-2 (236 aa).

A BH4 motif is present at residues 10 to 30; sequence DNREIVMKYIHYKLSQRGYEW. A Phosphothreonine; by MAPK8 modification is found at T69. S70 bears the Phosphoserine; by MAPK8 and PKC mark. S84 carries the post-translational modification Phosphoserine; by MAPK8. The BH3 motif lies at 90–104; it reads VHLTLRRAGDDFSRR. The BH1 signature appears at 133 to 152; sequence ELFRDGVNWGRIVAFFEFGG. Positions 184-199 match the BH2 motif; the sequence is TWIQDNGGWDAFVELY. The helical transmembrane segment at 209–230 threads the bilayer; sequence FSWLSLKTLLSLALVGACITLG.

It belongs to the Bcl-2 family. In terms of assembly, forms homodimers, and heterodimers with BAX, BAD, BAK and Bcl-X(L). Heterodimerization with BAX requires intact BH1 and BH2 motifs, and is necessary for anti-apoptotic activity. Component of the complex, at least composed of LRPPRC, BECN1 and BCL2; the interactions prevent BECN1 from forming an autophagy-inducing complex with PIK3C3. Interacts with EI24. Also interacts with APAF1, BBC3, BCL2L1, BNIPL, MRPL41 and TP53BP2. Binding to FKBP8 seems to target BCL2 to the mitochondria and probably interferes with the binding of BCL2 to its targets. Interacts with BAG1 in an ATP-dependent manner. Interacts with RAF1 (the 'Ser-338' and 'Ser-339' phosphorylated form). Interacts (via the BH4 domain) with EGLN3; the interaction prevents the formation of the BAX-BCL2 complex and inhibits the anti-apoptotic activity of BCL2. Interacts with G0S2; this interaction also prevents the formation of the anti-apoptotic BAX-BCL2 complex. Interacts with RTL10/BOP. Interacts with the SCF(FBXO10) complex. Interacts (via the loop between motifs BH4 and BH3) with NLRP1 (via LRR repeats), but not with NLRP2, NLRP3, NLRP4, PYCARD, nor MEFV. Interacts with GIMAP3/IAN4, GIMAP4/IAN1 and GIMAP5/IAN5. Interacts with BCAP31. Interacts with IRF3; the interaction is inhibited by Sendai virus infection. Interacts with BECN1; thereby inhibiting autophagy in non-starvation conditions. Interacts with AMBRA1; thereby inhibiting autophagy. In terms of processing, phosphorylation/dephosphorylation on Ser-70 regulates anti-apoptotic activity. Growth factor-stimulated phosphorylation on Ser-70 by PKC is required for the anti-apoptosis activity and occurs during the G2/M phase of the cell cycle. In the absence of growth factors, BCL2 appears to be phosphorylated by other protein kinases such as ERKs and stress-activated kinases. Phosphorylated by MAPK8/JNK1 at Thr-69, Ser-70 and Ser-84, which stimulates starvation-induced autophagy. Dephosphorylated by protein phosphatase 2A (PP2A). Post-translationally, proteolytically cleaved by caspases during apoptosis. The cleaved protein, lacking the BH4 motif, has pro-apoptotic activity, causes the release of cytochrome c into the cytosol promoting further caspase activity. Monoubiquitinated by PRKN, leading to an increase in its stability. Ubiquitinated by SCF(FBXO10), leading to its degradation by the proteasome.

The protein resides in the mitochondrion outer membrane. The protein localises to the nucleus membrane. It is found in the endoplasmic reticulum membrane. It localises to the cytoplasm. Suppresses apoptosis in a variety of cell systems including factor-dependent lymphohematopoietic and neural cells. Regulates cell death by controlling the mitochondrial membrane permeability. Appears to function in a feedback loop system with caspases. Inhibits caspase activity either by preventing the release of cytochrome c from the mitochondria and/or by binding to the apoptosis-activating factor (APAF-1). Also acts as an inhibitor of autophagy: interacts with BECN1 and AMBRA1 during non-starvation conditions and inhibits their autophagy function. May attenuate inflammation by impairing NLRP1-inflammasome activation, hence CASP1 activation and IL1B release. The polypeptide is Apoptosis regulator Bcl-2 (BCL2) (Cricetulus griseus (Chinese hamster)).